A 421-amino-acid polypeptide reads, in one-letter code: Large ribosomal subunit protein uL4 (421 aa).

An N-acetylalanine modification is found at Ala-2. Lys-14 is subject to N6-acetyllysine. Position 97 is an omega-N-methylarginine (Arg-97). The residue at position 106 (Lys-106) is an N6-acetyllysine. Residue Lys-239 forms a Glycyl lysine isopeptide (Lys-Gly) (interchain with G-Cter in SUMO2) linkage. At Lys-259 the chain carries N6-acetyllysine. The residue at position 266 (Thr-266) is a Phosphothreonine. Phosphoserine is present on Ser-290. The residue at position 300 (Arg-300) is a Citrulline. Lys-327 participates in a covalent cross-link: Glycyl lysine isopeptide (Lys-Gly) (interchain with G-Cter in SUMO2). An N6-acetyllysine mark is found at Lys-333 and Lys-353. A disordered region spans residues 359–421; it reads EAKSEEKGVP…PTTEEKKPAA (63 aa). Position 361 is an N6-acetyllysine; alternate (Lys-361). Lys-361 participates in a covalent cross-link: Glycyl lysine isopeptide (Lys-Gly) (interchain with G-Cter in SUMO1); alternate. The residue at position 362 (Ser-362) is a Phosphoserine. The span at 368–391 shows a compositional bias: basic residues; the sequence is PGKKPRRKKGKKTVGVKKPKKPVV. A compositionally biased stretch (basic and acidic residues) spans 401–421; that stretch reads PAADKKPAEKKPTTEEKKPAA.

Belongs to the universal ribosomal protein uL4 family. In terms of assembly, component of the large ribosomal subunit. May bind IPO9 with low affinity. Interacts with RBM3. Post-translationally, citrullinated by PADI4.

Its subcellular location is the cytoplasm. In terms of biological role, component of the large ribosomal subunit. The ribosome is a large ribonucleoprotein complex responsible for the synthesis of proteins in the cell. In Canis lupus familiaris (Dog), this protein is Large ribosomal subunit protein uL4 (RPL4).